Consider the following 184-residue polypeptide: MNLKPESYILRIGHRPERDQRVTTHVGLSSRALGASGMYLAADDAKVADSITDVATRFGGTFFCENNVKWKSCINQFKKSGGKVVHLTMYGLRLQDVIADIRKEEKVMIVVGAEKVPGDLYELADYNVAVANQPHSEISALALCLDHLYEGKELDLAFPDAELEVLPTKIGKTTIKHEHDQEKP.

Residues Leu87, 112–116 (GAEKV), and 130–137 (VANQPHSE) contribute to the S-adenosyl-L-methionine site.

The protein belongs to the aTrm56 family. Homodimer.

The protein resides in the cytoplasm. It catalyses the reaction cytidine(56) in tRNA + S-adenosyl-L-methionine = 2'-O-methylcytidine(56) in tRNA + S-adenosyl-L-homocysteine + H(+). In terms of biological role, specifically catalyzes the AdoMet-dependent 2'-O-ribose methylation of cytidine at position 56 in tRNAs. This chain is tRNA (cytidine(56)-2'-O)-methyltransferase, found in Methanocorpusculum labreanum (strain ATCC 43576 / DSM 4855 / Z).